Here is a 102-residue protein sequence, read N- to C-terminus: MSRRCELTAKGPQVGHKVSHSNIKTKRRFLPNLCNVTFISDALGRNVRLRVSTNAIKSVDHNGGLDAYLLKANAATLSPRALELKRAIEKKAAEAAPVAKAS.

A disordered region spans residues M1–H20.

It belongs to the bacterial ribosomal protein bL28 family.

The chain is Large ribosomal subunit protein bL28 from Bradyrhizobium sp. (strain BTAi1 / ATCC BAA-1182).